The sequence spans 279 residues: Acetylglutamate kinase (279 aa).

Substrate-binding positions include 64 to 65, Arg-86, and Asn-177; that span reads GG.

This sequence belongs to the acetylglutamate kinase family. ArgB subfamily.

The protein localises to the cytoplasm. It catalyses the reaction N-acetyl-L-glutamate + ATP = N-acetyl-L-glutamyl 5-phosphate + ADP. The protein operates within amino-acid biosynthesis; L-arginine biosynthesis; N(2)-acetyl-L-ornithine from L-glutamate: step 2/4. In terms of biological role, catalyzes the ATP-dependent phosphorylation of N-acetyl-L-glutamate. In Campylobacter jejuni subsp. doylei (strain ATCC BAA-1458 / RM4099 / 269.97), this protein is Acetylglutamate kinase.